The chain runs to 114 residues: T cell receptor alpha variable 12-3 (114 aa).

The signal sequence occupies residues 1–21; sequence MMKSLRVLLVILWLQLSWVWS. The region spanning 24–114 is the Ig-like domain; sequence KEVEQDPGPL…DSATYLCAMS (91 aa). N-linked (GlcNAc...) asparagine glycosylation is present at N44. A disulfide bridge links C45 with C111.

As to quaternary structure, alpha-beta TR is a heterodimer composed of an alpha and beta chain; disulfide-linked. The alpha-beta TR is associated with the transmembrane signaling CD3 coreceptor proteins to form the TR-CD3 (TcR or TCR). The assembly of alpha-beta TR heterodimers with CD3 occurs in the endoplasmic reticulum where a single alpha-beta TR heterodimer associates with one CD3D-CD3E heterodimer, one CD3G-CD3E heterodimer and one CD247 homodimer forming a stable octameric structure. CD3D-CD3E and CD3G-CD3E heterodimers preferentially associate with TR alpha and TR beta chains, respectively. The association of the CD247 homodimer is the last step of TcR assembly in the endoplasmic reticulum and is required for transport to the cell surface.

It is found in the cell membrane. Functionally, v region of the variable domain of T cell receptor (TR) alpha chain that participates in the antigen recognition. Alpha-beta T cell receptors are antigen specific receptors which are essential to the immune response and are present on the cell surface of T lymphocytes. Recognize peptide-major histocompatibility (MH) (pMH) complexes that are displayed by antigen presenting cells (APC), a prerequisite for efficient T cell adaptive immunity against pathogens. Binding of alpha-beta TR to pMH complex initiates TR-CD3 clustering on the cell surface and intracellular activation of LCK that phosphorylates the ITAM motifs of CD3G, CD3D, CD3E and CD247 enabling the recruitment of ZAP70. In turn ZAP70 phosphorylates LAT, which recruits numerous signaling molecules to form the LAT signalosome. The LAT signalosome propagates signal branching to three major signaling pathways, the calcium, the mitogen-activated protein kinase (MAPK) kinase and the nuclear factor NF-kappa-B (NF-kB) pathways, leading to the mobilization of transcription factors that are critical for gene expression and essential for T cell growth and differentiation. The T cell repertoire is generated in the thymus, by V-(D)-J rearrangement. This repertoire is then shaped by intrathymic selection events to generate a peripheral T cell pool of self-MH restricted, non-autoaggressive T cells. Post-thymic interaction of alpha-beta TR with the pMH complexes shapes TR structural and functional avidity. In Homo sapiens (Human), this protein is T cell receptor alpha variable 12-3.